Reading from the N-terminus, the 411-residue chain is Phosphoglycerate kinase (411 aa).

Residues 22–24 (DFN), Arg-37, 60–63 (HLSR), Arg-123, and Arg-165 contribute to the substrate site. ATP is bound by residues Lys-216, Glu-339, and 366 to 369 (GGDS).

The protein belongs to the phosphoglycerate kinase family. Monomer.

The protein localises to the cytoplasm. It carries out the reaction (2R)-3-phosphoglycerate + ATP = (2R)-3-phospho-glyceroyl phosphate + ADP. Its pathway is carbohydrate degradation; glycolysis; pyruvate from D-glyceraldehyde 3-phosphate: step 2/5. The chain is Phosphoglycerate kinase (pgk) from Mycoplasma genitalium (strain ATCC 33530 / DSM 19775 / NCTC 10195 / G37) (Mycoplasmoides genitalium).